We begin with the raw amino-acid sequence, 245 residues long: tRNA1(Val) (adenine(37)-N6)-methyltransferase (245 aa).

It belongs to the methyltransferase superfamily. tRNA (adenine-N(6)-)-methyltransferase family.

Its subcellular location is the cytoplasm. The catalysed reaction is adenosine(37) in tRNA1(Val) + S-adenosyl-L-methionine = N(6)-methyladenosine(37) in tRNA1(Val) + S-adenosyl-L-homocysteine + H(+). Functionally, specifically methylates the adenine in position 37 of tRNA(1)(Val) (anticodon cmo5UAC). The chain is tRNA1(Val) (adenine(37)-N6)-methyltransferase from Klebsiella pneumoniae subsp. pneumoniae (strain ATCC 700721 / MGH 78578).